Reading from the N-terminus, the 91-residue chain is Long neurotoxin LNTX28 (91 aa).

Residues M1–T21 form the signal peptide. 5 disulfides stabilise this stretch: C24–C41, C34–C62, C47–C51, C66–C77, and C78–C83.

This sequence belongs to the three-finger toxin family. Long-chain subfamily. Type II alpha-neurotoxin sub-subfamily. In terms of tissue distribution, expressed by the venom gland.

Its subcellular location is the secreted. Binds with high affinity to muscular (alpha-1/CHRNA1) and neuronal (alpha-7/CHRNA7) nicotinic acetylcholine receptor (nAChR) and inhibits acetylcholine from binding to the receptor, thereby impairing neuromuscular and neuronal transmission. The protein is Long neurotoxin LNTX28 of Ophiophagus hannah (King cobra).